The sequence spans 356 residues: Cytochrome c oxidase subunit 2 (356 aa).

The N-terminal stretch at 1-23 is a signal peptide; it reads MNKGLCNWRLFSLFGMMALLLAG. Residues 24-259 are cytochrome c oxidase subunit II; sequence CGKPFLSTLQ…QNAKKPVVTD (236 aa). A run of 2 helical transmembrane segments spans residues 45–65 and 93–113; these read LMLLSTSIMVLVIVVVAIIFV and IIWTVIPIILLLILAVPTVLT. Residues His-178, Cys-219, Cys-223, and His-227 each coordinate Cu cation. The region spanning 260–356 is the Cytochrome c domain; the sequence is PVAKEGEAIF…TKYLMSLKVE (97 aa). The heme c site is built by Cys-273, Cys-276, His-277, and Met-331.

It belongs to the cytochrome c oxidase subunit 2 family. Cu cation is required as a cofactor. The cofactor is heme c.

The protein localises to the cell membrane. The enzyme catalyses 4 Fe(II)-[cytochrome c] + O2 + 8 H(+)(in) = 4 Fe(III)-[cytochrome c] + 2 H2O + 4 H(+)(out). In terms of biological role, subunits I and II form the functional core of the enzyme complex. Electrons originating in cytochrome c are transferred via heme a and Cu(A) to the binuclear center formed by heme a3 and Cu(B). The protein is Cytochrome c oxidase subunit 2 (ctaC) of Bacillus sp. (strain PS3).